The chain runs to 55 residues: Serine protease inhibitor Kazal-type 1 (55 aa).

The 54-residue stretch at 2-55 (QGRDANCNYEFPGCPRNLEPVCGTDGNTYNNECLLCMENKKRDVPIRIQKDGPC) folds into the Kazal-like domain. 3 disulfides stabilise this stretch: cysteine 8–cysteine 37, cysteine 15–cysteine 34, and cysteine 23–cysteine 55.

It localises to the secreted. In terms of biological role, serine protease inhibitor which exhibits anti-trypsin activity. In the pancreas, protects against trypsin-catalyzed premature activation of zymogens. In the male reproductive tract, binds to sperm heads where it modulates sperm capacitance by inhibiting calcium uptake and nitrogen oxide (NO) production. This Monodelphis domestica (Gray short-tailed opossum) protein is Serine protease inhibitor Kazal-type 1 (SPINK1).